The following is a 34-amino-acid chain: Photosystem II reaction center protein Psb30 (34 aa).

A helical transmembrane segment spans residues 6 to 26 (VIAQLVSLGVIVLVGPAVIIL).

Belongs to the Psb30/Ycf12 family. PSII is composed of 1 copy each of membrane proteins PsbA, PsbB, PsbC, PsbD, PsbE, PsbF, PsbH, PsbI, PsbJ, PsbK, PsbL, PsbM, PsbT, PsbX, PsbY, PsbZ, Psb30/Ycf12, peripheral proteins of the oxygen-evolving complex and a large number of cofactors. It forms dimeric complexes.

The protein resides in the plastid. Its subcellular location is the chloroplast thylakoid membrane. A core subunit of photosystem II (PSII), probably helps stabilize the reaction center. The sequence is that of Photosystem II reaction center protein Psb30 from Pyropia yezoensis (Susabi-nori).